A 269-amino-acid chain; its full sequence is MRSLADFEFNKAPLCEGMILACEAIRRDFPSQDVYDELERLVSLAKEEISQLLPLEEQLEKLIALFYGDWGFKASRGVYRLSDALWLDQVLKNRQGSAVSLGAVLLWVANRLDLPLLPVIFPTQLILRIECPDGEIWLINPFNGESLSEHMLDVWLKGNISPSAELFYEDLDEADNIEVIRKLLDTLKASLMEENQMELALRTSEALLQFNPEDPYEIRDRGLIYAQLDCEHVALNDLSYFVEQCPEDPISEMIRAQINNIAHKHIVLH.

It belongs to the UPF0162 family.

This Escherichia coli O157:H7 protein is UPF0162 protein YchA (ychA).